Here is a 370-residue protein sequence, read N- to C-terminus: 3-isopropylmalate dehydrogenase (370 aa).

77 to 90 (GPKWDSVPYEVRPE) provides a ligand contact to NAD(+). Substrate contacts are provided by Arg-97, Arg-107, Arg-135, and Asp-226. The Mg(2+) site is built by Asp-226, Asp-250, and Asp-254. 290–302 (GSAPDIAGKGIAN) lines the NAD(+) pocket.

This sequence belongs to the isocitrate and isopropylmalate dehydrogenases family. LeuB type 1 subfamily. As to quaternary structure, homodimer. Mg(2+) is required as a cofactor. Requires Mn(2+) as cofactor.

The protein resides in the cytoplasm. It catalyses the reaction (2R,3S)-3-isopropylmalate + NAD(+) = 4-methyl-2-oxopentanoate + CO2 + NADH. The protein operates within amino-acid biosynthesis; L-leucine biosynthesis; L-leucine from 3-methyl-2-oxobutanoate: step 3/4. Catalyzes the oxidation of 3-carboxy-2-hydroxy-4-methylpentanoate (3-isopropylmalate) to 3-carboxy-4-methyl-2-oxopentanoate. The product decarboxylates to 4-methyl-2 oxopentanoate. The protein is 3-isopropylmalate dehydrogenase of Rhizobium etli (strain ATCC 51251 / DSM 11541 / JCM 21823 / NBRC 15573 / CFN 42).